Here is a 63-residue protein sequence, read N- to C-terminus: Large ribosomal subunit protein bL32 (63 aa).

This sequence belongs to the bacterial ribosomal protein bL32 family.

This Lactobacillus delbrueckii subsp. bulgaricus (strain ATCC 11842 / DSM 20081 / BCRC 10696 / JCM 1002 / NBRC 13953 / NCIMB 11778 / NCTC 12712 / WDCM 00102 / Lb 14) protein is Large ribosomal subunit protein bL32.